The chain runs to 313 residues: tRNA dimethylallyltransferase (313 aa).

11–18 (GPTAGGKT) lines the ATP pocket. Residue 13 to 18 (TAGGKT) participates in substrate binding. Interaction with substrate tRNA regions lie at residues 36–39 (DSAL), 160–164 (QRIGR), and 243–248 (RCVGYR).

This sequence belongs to the IPP transferase family. As to quaternary structure, monomer. Requires Mg(2+) as cofactor.

The enzyme catalyses adenosine(37) in tRNA + dimethylallyl diphosphate = N(6)-dimethylallyladenosine(37) in tRNA + diphosphate. Its function is as follows. Catalyzes the transfer of a dimethylallyl group onto the adenine at position 37 in tRNAs that read codons beginning with uridine, leading to the formation of N6-(dimethylallyl)adenosine (i(6)A). The polypeptide is tRNA dimethylallyltransferase (Neisseria meningitidis serogroup B (strain ATCC BAA-335 / MC58)).